The primary structure comprises 97 residues: RxLR effector protein PexRD21 (97 aa).

The N-terminal stretch at methionine 1–alanine 21 is a signal peptide. Positions arginine 48–arginine 66 match the RxLR-dEER motif.

The protein belongs to the RxLR effector family.

It localises to the secreted. The protein localises to the host cell membrane. Effector that is involved in host plant infection. Contributes to virulence during the early infection stage, by inhibiting plant defense responses induced by both PAMP-triggered immunity (PTI) and effector-triggered immunity (ETI). The protein is RxLR effector protein PexRD21 of Phytophthora infestans (strain T30-4) (Potato late blight agent).